Here is a 235-residue protein sequence, read N- to C-terminus: Calcium-activated potassium channel subunit beta-2 (235 aa).

The tract at residues 1–45 (MFIWTSGRTSSSYRHDEKRNIYQKIRDHDLLDKRKTVTALKAGED) is ball and chain. The Cytoplasmic segment spans residues 1–46 (MFIWTSGRTSSSYRHDEKRNIYQKIRDHDLLDKRKTVTALKAGEDR). A helical membrane pass occupies residues 47–67 (AILLGLAMMVCSIMMYFLLGI). The Extracellular portion of the chain corresponds to 68-194 (TLLRSYMQSV…VILTKLYSSN (127 aa)). Residues Asn-88, Asn-96, and Asn-119 are each glycosylated (N-linked (GlcNAc...) asparagine). The chain crosses the membrane as a helical span at residues 195-215 (VLFHSLFWPTCMMAGGVAIVA). At 216 to 235 (MVKLTQYLSLLCERIQRINR) the chain is on the cytoplasmic side.

The protein belongs to the KCNMB (TC 8.A.14.1) family. KCNMB2 subfamily. In terms of assembly, interacts with KCNMA1 tetramer. There are probably 4 molecules of KCMNB2 per KCNMA1 tetramer. Post-translationally, N-glycosylated. In terms of tissue distribution, expressed in kidney, heart and brain. Highly expressed in ovary. Expressed at low level in other tissues.

It is found in the membrane. In terms of biological role, regulatory subunit of the calcium activated potassium KCNMA1 (maxiK) channel. Modulates the calcium sensitivity and gating kinetics of KCNMA1, thereby contributing to KCNMA1 channel diversity. Acts as a negative regulator that confers rapid and complete inactivation of KCNMA1 channel complex. May participate in KCNMA1 inactivation in chromaffin cells of the adrenal gland or in hippocampal CA1 neurons. The polypeptide is Calcium-activated potassium channel subunit beta-2 (KCNMB2) (Homo sapiens (Human)).